The primary structure comprises 69 residues: U2-agatoxin-Ao1i (69 aa).

Residues 1-20 (MKAIISLLLISAMVFSMIEA) form the signal peptide. Residues 21–34 (VPVXXGLQLFESER) constitute a propeptide that is removed on maturation. Intrachain disulfides connect Cys36-Cys52, Cys43-Cys57, and Cys51-Cys67. Leu68 is modified (leucine amide).

The protein belongs to the neurotoxin 01 (U2-agtx) family. Expressed by the venom gland.

The protein resides in the secreted. Insect active toxin causing rapid but reversible paralysis in crickets. No activity shown in mammals. Does not show effect on mammalian voltage-gated calcium channels. The chain is U2-agatoxin-Ao1i from Agelena orientalis (Funnel-web spider).